The primary structure comprises 271 residues: Methylcorrinoid:tetrahydrofolate methyltransferase (271 aa).

Positions 1–247 (MIIIGEKLNG…GAIFATDALL (247 aa)) constitute a Pterin-binding domain.

It belongs to the vitamin-B12 dependent methionine synthase family. The proline betaine:THF methyl transfer system is composed of two methyltransferases, MtpB and MtqA, and the corrinoid protein MtqC. The L-carnitine:THF methyl transfer system is composed of two methyltransferases, MtcB and MtqA, and the corrinoid protein MtqC.

It catalyses the reaction methyl-Co(III)-[quaternary-amine-specific corrinoid protein] + (6S)-5,6,7,8-tetrahydrofolate = Co(I)-[quaternary-amine-specific corrinoid protein] + (6S)-5-methyl-5,6,7,8-tetrahydrofolate + H(+). In terms of biological role, involved in the degradation of the quaternary amines L-proline betaine and L-carnitine. Component of a corrinoid-dependent methyltransferase system that transfers a methyl group from L-proline betaine or L-carnitine to tetrahydrofolate (THF), forming methyl-THF, a key intermediate in the Wood-Ljungdahl acetogenesis pathway. MtqA catalyzes the transfer of a methyl group from the methylated corrinoid protein MtqC to THF, forming methyl-THF. The polypeptide is Methylcorrinoid:tetrahydrofolate methyltransferase (Eubacterium limosum).